Reading from the N-terminus, the 579-residue chain is Putative laccase-9 (579 aa).

The signal sequence occupies residues 1–27 (MGTAKLPALLWLLAGVVLALAVNPAHG). 2 Plastocyanin-like domains span residues 36 to 152 (FITE…PKRG) and 162 to 319 (KEIP…YTDS). N-linked (GlcNAc...) asparagine glycans are attached at residues asparagine 41 and asparagine 82. 2 residues coordinate Cu cation: histidine 86 and histidine 88. The N-linked (GlcNAc...) asparagine glycan is linked to asparagine 114. Residues histidine 131 and histidine 133 each contribute to the Cu cation site. Asparagine 307, asparagine 405, and asparagine 446 each carry an N-linked (GlcNAc...) asparagine glycan. The region spanning 436-563 (PTAFVDPPVN…DTVFIVKDGK (128 aa)) is the Plastocyanin-like 3 domain. Residues histidine 480, histidine 483, and histidine 485 each contribute to the Cu cation site. Asparagine 496 is a glycosylation site (N-linked (GlcNAc...) asparagine). Residues histidine 542, cysteine 543, histidine 544, histidine 548, and methionine 553 each coordinate Cu cation.

The protein belongs to the multicopper oxidase family. Requires Cu cation as cofactor.

The protein localises to the secreted. Its subcellular location is the extracellular space. The protein resides in the apoplast. It catalyses the reaction 4 hydroquinone + O2 = 4 benzosemiquinone + 2 H2O. Lignin degradation and detoxification of lignin-derived products. The chain is Putative laccase-9 (LAC9) from Oryza sativa subsp. japonica (Rice).